Here is a 392-residue protein sequence, read N- to C-terminus: Probable tRNA sulfurtransferase (392 aa).

One can recognise a THUMP domain in the interval 59–166 (SCYREALKRV…DEGLFIYTTE (108 aa)). ATP-binding positions include 186 to 187 (LL), 211 to 212 (YF), Arg-269, Gly-290, and Gln-299.

The protein belongs to the ThiI family.

It is found in the cytoplasm. The catalysed reaction is [ThiI sulfur-carrier protein]-S-sulfanyl-L-cysteine + a uridine in tRNA + 2 reduced [2Fe-2S]-[ferredoxin] + ATP + H(+) = [ThiI sulfur-carrier protein]-L-cysteine + a 4-thiouridine in tRNA + 2 oxidized [2Fe-2S]-[ferredoxin] + AMP + diphosphate. It carries out the reaction [ThiS sulfur-carrier protein]-C-terminal Gly-Gly-AMP + S-sulfanyl-L-cysteinyl-[cysteine desulfurase] + AH2 = [ThiS sulfur-carrier protein]-C-terminal-Gly-aminoethanethioate + L-cysteinyl-[cysteine desulfurase] + A + AMP + 2 H(+). It participates in cofactor biosynthesis; thiamine diphosphate biosynthesis. In terms of biological role, catalyzes the ATP-dependent transfer of a sulfur to tRNA to produce 4-thiouridine in position 8 of tRNAs, which functions as a near-UV photosensor. Also catalyzes the transfer of sulfur to the sulfur carrier protein ThiS, forming ThiS-thiocarboxylate. This is a step in the synthesis of thiazole, in the thiamine biosynthesis pathway. The sulfur is donated as persulfide by IscS. The polypeptide is Probable tRNA sulfurtransferase (Coxiella burnetii (strain RSA 493 / Nine Mile phase I)).